The chain runs to 659 residues: MIQIGKIFAGRYRIVKQIGRGGMADVYLAKDLILDGEEVAVKVLRTNYQTDPIAVARFQREARAMADLDHPHIVRITDIGEEDGQQYLAMEYVAGLDLKRYIKEHYPLSNEEAVRIMGQILLAMRLAHTRGIVHRDLKPQNILLTPDGTAKVTDFGIAVAFAETSLTQTNSMLGSVHYLSPEQARGSKATVQSDIYAMGIIFYEMLTGHIPYDGDSAVTIALQHFQNPLPSVIAENSSVPQALENVIIKATAKKLTNRYRSVSEMYVDLSSSLSYNRRNESKLIFDETSKADTKTLPKVSQSTLTSIPKVQAQTEHKSIKNPSQAVTEETYQPQAPKKHRFKMRYLILLASLVLVAASLIWILSRTPATIAIPDVAGQTVAEAKATLKKANFEIGEEKTEASEKVEEGRIIRTDPGAGTGRKEGTKINLVVSSGKQSFQISNYVGRKSSDVIAELKEKKVPDNLIKIEEEESNESEAGTVLKQSLPEGTTYDLSKATQIVLTVAKKATTIQLGNYIGRNSTEVISELKQKKVPENLIKIEEEESSESEPGTIMKQSPGAGTTYDVSKPTQIVLTVAKKVTSVAMPSYIGSSLEFTKNNLIQIVGIKEANIEVVEVTTAPAGSVEGMVVEQSPRAGEKVDLNKTRVKISIYKPKTTSATP.

At Met1–Lys342 the chain is on the cytoplasmic side. A Protein kinase domain is found at Tyr12–Leu273. ATP-binding positions include Ile18 to Val26 and Lys42. Asp136 acts as the Proton acceptor in catalysis. The helical transmembrane segment at Met343–Leu363 threads the bilayer. The Extracellular segment spans residues Ser364–Pro659. PASTA domains lie at Thr366–Ser433, Gly434–Lys505, Lys506–Lys577, and Lys578–Lys651. Positions Glu541–Thr561 are disordered.

It belongs to the protein kinase superfamily. Ser/Thr protein kinase family. In terms of assembly, homodimer. StkP forms dimers through its transmembrane and extracellular domains. Dimer formation likely promotes autophosphorylation activity and might be necessary for targeting StkP substrate. In terms of processing, autophosphorylation occurs predominantly at the threonine residue and weakly at the serine residue. Dephosphorylated by PhpP.

It localises to the cell membrane. It catalyses the reaction L-seryl-[protein] + ATP = O-phospho-L-seryl-[protein] + ADP + H(+). The catalysed reaction is L-threonyl-[protein] + ATP = O-phospho-L-threonyl-[protein] + ADP + H(+). Protein kinase involved in signal transduction pathways that regulate various cellular processes. Likely senses intracellular peptidoglycan subunits present in the cell division septa of actively growing cells; thus, intracellular unlinked peptidoglycan may serve as the signal molecules that trigger StkP phosphorylation activity on a set of substrates. Plays a crucial role in the regulation of cell shape and cell division of S.pneumoniae through control of at least DivIVA activity. Is involved in competence triggering, and is required for the expression of the central competence operon comCDE. StkP also plays an important role for bacterial survival in vivo. Identified target substrates that are specifically phosphorylated by StkP in vivo, mainly on threonine residues, are DivIVA, GlmM, PpaC, MapZ, KhpB (also called EloR/Jag, shown in strains R6 and Rx1) and StkP itself. Autophosphorylated StkP is a substrate for the cotranscribed protein phosphatase PhpP (shown in the avirulent strain Rx / Cp1015); PhpP and StkP appear to constitute a functional signaling couple in vivo. In Streptococcus pneumoniae serotype 2 (strain D39 / NCTC 7466), this protein is Serine/threonine-protein kinase StkP (stkP).